A 366-amino-acid chain; its full sequence is Glycerol-3-phosphate dehydrogenase [NAD(+)], glycosomal (366 aa).

NAD(+) is bound by residues 22 to 27 (GSGAFG), F97, K125, and A157. K125 provides a ligand contact to substrate. Residue K210 is the Proton acceptor of the active site. R274, V298, and E300 together coordinate NAD(+). 274-275 (RN) provides a ligand contact to substrate. Residues 364-366 (SKL) carry the Microbody targeting signal motif.

The protein belongs to the NAD-dependent glycerol-3-phosphate dehydrogenase family. Homodimer.

Its subcellular location is the glycosome. The catalysed reaction is sn-glycerol 3-phosphate + NAD(+) = dihydroxyacetone phosphate + NADH + H(+). This chain is Glycerol-3-phosphate dehydrogenase [NAD(+)], glycosomal (GPD), found in Leishmania mexicana.